Here is a 115-residue protein sequence, read N- to C-terminus: Protein TrbA (115 aa).

A run of 4 helical transmembrane segments spans residues 5-25, 39-59, 60-80, and 91-111; these read YLKM…GYFF, LVFL…LWFL, CGAI…AALP, and IFIC…FIRG.

The protein resides in the cell membrane. The protein is Protein TrbA (trbA) of Escherichia coli (strain K12).